Here is a 349-residue protein sequence, read N- to C-terminus: Fe(3+) ions import ATP-binding protein FbpC (349 aa).

The ABC transporter domain occupies 4 to 236 (LELHHIGKSY…PVDEPTATFL (233 aa)). Residue 36-43 (GPSGSGKT) participates in ATP binding.

This sequence belongs to the ABC transporter superfamily. Fe(3+) ion importer (TC 3.A.1.10) family. The complex is composed of two ATP-binding proteins (FbpC), two transmembrane proteins (FbpB) and a solute-binding protein (FbpA).

It localises to the cell inner membrane. It catalyses the reaction Fe(3+)(out) + ATP + H2O = Fe(3+)(in) + ADP + phosphate + H(+). Functionally, part of the ABC transporter complex FbpABC involved in Fe(3+) ions import. Responsible for energy coupling to the transport system. In Yersinia pestis bv. Antiqua (strain Antiqua), this protein is Fe(3+) ions import ATP-binding protein FbpC.